Reading from the N-terminus, the 271-residue chain is MATYFVGDIQGCLDELLLLLERVEFNREKDQLWLTGDLVARGPKSLETLRFVKSLGNAAVTILGNHDLHLLAVSQGISRVKEKDKTAPIFTAPDSEELLTWLRHQPLLAVHSEYDIVMTHAGISPQWNMATAIDCAREVESVLLSDKWVLLLENMYENYPDTWDVTLSGIDRYRYIINAFTRMRFCHLDGRLDMECKLPPQDINSDELVPWFELENRLPLSHKVIFGHWAALMGHDGNNVIALDTGCVWGEYMTMYRVDDGKYFTQKAIEQ.

It belongs to the Ap4A hydrolase family.

It catalyses the reaction P(1),P(4)-bis(5'-adenosyl) tetraphosphate + H2O = 2 ADP + 2 H(+). Its function is as follows. Hydrolyzes diadenosine 5',5'''-P1,P4-tetraphosphate to yield ADP. The polypeptide is Bis(5'-nucleosyl)-tetraphosphatase, symmetrical (Aliivibrio fischeri (strain ATCC 700601 / ES114) (Vibrio fischeri)).